The sequence spans 642 residues: Kinesin-2b (642 aa).

A Kinesin motor domain is found at 12-344 (NVMVMVRVRP…LRYADRAKQI (333 aa)). An ATP-binding site is contributed by 107-114 (GQTGSGKT). 4 residues coordinate ADP: Gly110, Gly112, Lys113, and Thr114. Mg(2+) is bound at residue Thr114. Positions 415–475 (VQSLRKNLDK…ERKAKERQLM (61 aa)) form a coiled coil.

Belongs to the TRAFAC class myosin-kinesin ATPase superfamily. Kinesin family. Kinesin II subfamily.

It is found in the cell projection. It localises to the cilium. The protein localises to the flagellum. The protein resides in the cytoplasm. Its subcellular location is the cytoskeleton. It is found in the flagellum axoneme. It localises to the flagellum basal body. Its function is as follows. Involved in anterograde intraflagellar transport (IFT). Involved in flagellar assembly. The sequence is that of Kinesin-2b from Giardia intestinalis (strain ATCC 50803 / WB clone C6) (Giardia lamblia).